Here is a 191-residue protein sequence, read N- to C-terminus: Auxin-responsive protein IAA32 (191 aa).

Residues leucine 32 to leucine 36 carry the EAR-like (transcriptional repression) motif. A PB1 domain is found at tyrosine 98–arginine 184.

It belongs to the Aux/IAA family. In terms of assembly, homodimers and heterodimers.

The protein localises to the nucleus. Its function is as follows. Aux/IAA proteins are short-lived transcriptional factors that function as repressors of early auxin response genes at low auxin concentrations. Repression is thought to result from the interaction with auxin response factors (ARFs), proteins that bind to the auxin-responsive promoter element (AuxRE). Formation of heterodimers with ARF proteins may alter their ability to modulate early auxin response genes expression. The protein is Auxin-responsive protein IAA32 of Arabidopsis thaliana (Mouse-ear cress).